We begin with the raw amino-acid sequence, 734 residues long: Meiotic driver SPOK1 (734 aa).

Residues 4-41 (KDRIAQLLRELEEAKARVEEAKAREAQERCEKERLQLE) are a coiled coil. Disordered stretches follow at residues 180 to 222 (ELTQ…ICSN) and 414 to 499 (LSSA…MADP). The span at 416–429 (SAPSSQNTDISEYT) shows a compositional bias: polar residues. Positions 457–468 (NEHDEHDEDHSE) are enriched in basic and acidic residues.

The protein localises to the cytoplasm. It localises to the nucleus. In terms of biological role, promotes unequal transmission of alleles from the parental zygote to progeny spores by acting as poison/antidote system, leading to poisoning of progeny that do not inherit the allele. May possess DNA nuclease activity that leads to spore killing, and a kinase activity that confers resistance to the nuclease activity. Can suppress meiotic drive by the P.anserina SPOK2, SPOK3 and SPOK4 proteins. This chain is Meiotic driver SPOK1, found in Podospora comata.